The following is a 203-amino-acid chain: MNRFVIADSTLCIGCHTCEAACSETHRQHGLQSMPRLRVMLNEKESAPQLCHHCEDAPCAVVCPVNAITRVDGAVQLNESLCVSCKLCGIACPFGAIEFSGSRPLDIPANANTPKAPPAPPAPARVSTLLDWVPGIRAIAVKCDLCSFDEQGPACVRMCPTKALHLVDNTDIARVSKRKRELTFNTDFGDLTLFQQAQSGEAK.

4 4Fe-4S ferredoxin-type domains span residues 2–32 (NRFVIADSTLCIGCHTCEAACSETHRQHGLQ), 42–72 (NEKESAPQLCHHCEDAPCAVVCPVNAITRVD), 73–102 (GAVQLNESLCVSCKLCGIACPFGAIEFSGS), and 137–169 (RAIAVKCDLCSFDEQGPACVRMCPTKALHLVDN). Cysteine 12, cysteine 15, cysteine 18, cysteine 22, cysteine 51, cysteine 54, cysteine 59, cysteine 63, cysteine 82, cysteine 85, cysteine 88, cysteine 92, cysteine 143, cysteine 146, cysteine 155, and cysteine 159 together coordinate [4Fe-4S] cluster.

FHL comprises of a formate dehydrogenase, unidentified electron carriers and a hydrogenase (isoenzyme 3). In this non-energy conserving pathway, molecular hydrogen and carbodioxide are released from formate. Requires [4Fe-4S] cluster as cofactor.

In terms of biological role, probable electron transfer protein for hydrogenase 3. The polypeptide is Formate hydrogenlyase subunit 2 (hycB) (Escherichia coli (strain K12)).